A 337-amino-acid polypeptide reads, in one-letter code: Mycothiol acetyltransferase (337 aa).

N-acetyltransferase domains follow at residues 11–151 (LDER…FELP) and 154–337 (VRLR…MYRK). Residue E37 participates in 1D-myo-inositol 2-(L-cysteinylamino)-2-deoxy-alpha-D-glucopyranoside binding. Acetyl-CoA is bound at residue 81 to 83 (LVI). E182 provides a ligand contact to 1D-myo-inositol 2-(L-cysteinylamino)-2-deoxy-alpha-D-glucopyranoside. The tract at residues 210–246 (RPTGSGDGDVADGGSTDGGPADSGSADGGAGEGGTGD) is disordered. Positions 221 to 234 (DGGSTDGGPADSGS) are enriched in low complexity. Residues 235 to 246 (ADGGAGEGGTGD) are compositionally biased toward gly residues. 1D-myo-inositol 2-(L-cysteinylamino)-2-deoxy-alpha-D-glucopyranoside contacts are provided by K257 and E271. Acetyl-CoA-binding positions include 275 to 277 (VGV) and 282 to 288 (QGGGLGR). Y309 contributes to the 1D-myo-inositol 2-(L-cysteinylamino)-2-deoxy-alpha-D-glucopyranoside binding site. 314-319 (NTAAIR) serves as a coordination point for acetyl-CoA.

It belongs to the acetyltransferase family. MshD subfamily. Monomer.

It carries out the reaction 1D-myo-inositol 2-(L-cysteinylamino)-2-deoxy-alpha-D-glucopyranoside + acetyl-CoA = mycothiol + CoA + H(+). Its function is as follows. Catalyzes the transfer of acetyl from acetyl-CoA to desacetylmycothiol (Cys-GlcN-Ins) to form mycothiol. This chain is Mycothiol acetyltransferase, found in Streptosporangium roseum (strain ATCC 12428 / DSM 43021 / JCM 3005 / KCTC 9067 / NCIMB 10171 / NRRL 2505 / NI 9100).